Consider the following 335-residue polypeptide: 2-acylglycerol O-acyltransferase 1 (335 aa).

The next 2 membrane-spanning stretches (helical) occupy residues 18 to 38 (TVAV…SIGI) and 40 to 60 (VMLI…WLYF). Residues N121 and N125 are each glycosylated (N-linked (GlcNAc...) asparagine). The chain crosses the membrane as a helical span at residues 132–152 (LFPGFTSYLHVLPLWFWCPVF). N180 carries N-linked (GlcNAc...) asparagine glycosylation.

The protein belongs to the diacylglycerol acyltransferase family. Expressed in stomach and liver.

It localises to the endoplasmic reticulum membrane. It carries out the reaction a 2-acylglycerol + an acyl-CoA = a 1,2-diacylglycerol + CoA. The catalysed reaction is 2-(9Z-octadecenoyl)-glycerol + butanoyl-CoA = 1-butanoyl-2-(9Z-octadecenoyl)-glycerol + CoA. It catalyses the reaction 2-(9Z-octadecenoyl)-glycerol + octanoyl-CoA = 1-octanoyl-2-(9Z-octadecenoyl)-glycerol + CoA. The enzyme catalyses 2-(9Z-octadecenoyl)-glycerol + dodecanoyl-CoA = 1-dodecanoyl-2-(9Z-octadecenoyl)-glycerol + CoA. It carries out the reaction 2-(9Z-octadecenoyl)-glycerol + tetradecanoyl-CoA = 1-tetradecanoyl-2-(9Z-octadecenoyl)-glycerol + CoA. The catalysed reaction is 2-(9Z-octadecenoyl)-glycerol + hexadecanoyl-CoA = 1-hexadecanoyl-2-(9Z-octadecenoyl)-glycerol + CoA. It catalyses the reaction 2-(9Z-octadecenoyl)-glycerol + octadecanoyl-CoA = 1-octadecanoyl-2-(9Z-octadecenoyl)-glycerol + CoA. The enzyme catalyses eicosanoyl-CoA + 2-(9Z-octadecenoyl)-glycerol = 1-eicosanoyl-2-(9Z-octadecenoyl)-glycerol + CoA. It carries out the reaction 2-(9Z-octadecenoyl)-glycerol + (9Z)-octadecenoyl-CoA = 1,2-di-(9Z-octadecenoyl)-glycerol + CoA. The catalysed reaction is 2-(9Z-octadecenoyl)-glycerol + (9Z,12Z)-octadecadienoyl-CoA = 1-(9Z,12Z-octadecadienoyl)-2-(9Z-octadecenoyl)-glycerol + CoA. It catalyses the reaction 2-(9Z-octadecenoyl)-glycerol + (5Z,8Z,11Z,14Z)-eicosatetraenoyl-CoA = 1-(5Z,8Z,11Z,14Z-eicosatetraenoyl)-2-(9Z-octadecenoyl)-glycerol + CoA. The enzyme catalyses a 2-acylglycerol + an acyl-CoA = a 1,2-diacyl-sn-glycerol + CoA. It carries out the reaction a 2-acylglycerol + an acyl-CoA = a 2,3-diacyl-sn-glycerol + CoA. The catalysed reaction is a 1-acylglycerol + an acyl-CoA = a 1,2-diacylglycerol + CoA. It catalyses the reaction 1-dodecanoylglycerol + (9Z)-octadecenoyl-CoA = 1-dodecanoyl-2-(9Z-octadecenoyl)-glycerol + CoA. The enzyme catalyses 1-tetradecanoylglycerol + (9Z)-octadecenoyl-CoA = 1-tetradecanoyl-2-(9Z-octadecenoyl)-glycerol + CoA. It carries out the reaction 1-hexadecanoylglycerol + (9Z)-octadecenoyl-CoA = 1-hexadecanoyl-2-(9Z-octadecenoyl)-glycerol + CoA. The catalysed reaction is 1-(9Z-octadecenoyl)-glycerol + (9Z)-octadecenoyl-CoA = 1,2-di-(9Z-octadecenoyl)-glycerol + CoA. It catalyses the reaction 1-(9Z,12Z-octadecadienoyl)-glycerol + (9Z)-octadecenoyl-CoA = 1-(9Z,12Z-octadecadienoyl)-2-(9Z-octadecenoyl)-glycerol + CoA. The enzyme catalyses 1-(9Z,12Z,15Z-octadecatrienoyl)-glycerol + (9Z)-octadecenoyl-CoA = 1-(9Z,12Z,15Z-octadecatrienoyl)-2-(9Z-octadecenoyl)-glycerol + CoA. It carries out the reaction 1-(5Z,8Z,11Z,14Z-eicosatetraenoyl)-glycerol + (9Z)-octadecenoyl-CoA = 1-(5Z,8Z,11Z,14Z-eicosatetraenoyl)-2-(9Z-octadecenoyl)-glycerol + CoA. The catalysed reaction is a 1-acylglycerol + an acyl-CoA = a 1,3-diacylglycerol + CoA. It catalyses the reaction 1-dodecanoylglycerol + (9Z)-octadecenoyl-CoA = 1-dodecanoyl-3-(9Z-octadecenoyl)-glycerol + CoA. The enzyme catalyses 1-hexadecanoylglycerol + (9Z)-octadecenoyl-CoA = 1-(9Z-octadecenoyl)-3-hexadecanoylglycerol + CoA. It carries out the reaction 1-octadecanoylglycerol + (9Z)-octadecenoyl-CoA = 1-octadecanoyl-3-(9Z-octadecenoyl)-glycerol + CoA. The catalysed reaction is 1-(9Z-octadecenoyl)-sn-glycerol + (9Z)-octadecenoyl-CoA = 1,3-di-(9Z-octadecenoyl)-glycerol + CoA. It catalyses the reaction 1-(9Z,12Z-octadecadienoyl)-glycerol + (9Z)-octadecenoyl-CoA = 1-(9Z-octadecenoyl)-3-(9Z,12Z-octadecadienoyl)-glycerol + CoA. The enzyme catalyses 1-(9Z,12Z,15Z-octadecatrienoyl)-glycerol + (9Z)-octadecenoyl-CoA = 1-(9Z,12Z,15Z-octadecatrienoyl)-3-(9Z-octadecenoyl)-glycerol + CoA. It carries out the reaction a 1-acyl-sn-glycerol + an acyl-CoA = a 1,3-diacyl-sn-glycerol + CoA. The catalysed reaction is a 3-acyl-sn-glycerol + an acyl-CoA = a 1,3-diacyl-sn-glycerol + CoA. It catalyses the reaction 3-octadecanoyl-sn-glycerol + (9Z)-octadecenoyl-CoA = 1-(9Z-octadecenoyl)-3-octadecanoyl-sn-glycerol + CoA. It functions in the pathway glycerolipid metabolism; triacylglycerol biosynthesis. Functionally, involved in glycerolipid synthesis and lipid metabolism. Catalyzes the formation of diacylglycerol, the precursor of triacylglycerol, by transferring the acyl chain of a fatty acyl-CoA to a monoacylglycerol, mainly at the sn-1 or sn-3 positions. It uses both sn-2-monoacylglycerol (2-acylglycerol) and sn-1-monoacylglycerol (1-acyl-sn-glycerol) equally well as substrates, and uses sn-3-monoacylglycerol (3-acyl-sn-glycerol) with lower efficiency. Probably not involved in absorption of dietary fat in the small intestine. The sequence is that of 2-acylglycerol O-acyltransferase 1 from Homo sapiens (Human).